Here is a 360-residue protein sequence, read N- to C-terminus: Hydroxycarboxylic acid receptor 2 (360 aa).

The Extracellular portion of the chain corresponds to 1–30; the sequence is MSKQNHFLVINGKNCCVFRDENIAKVLPPV. A helical transmembrane segment spans residues 31-51; it reads LGLEFVFGLLGNGLALWIFCF. Residues 52-60 are Cytoplasmic-facing; sequence HLKSWKSSR. The chain crosses the membrane as a helical span at residues 61-81; it reads IFLFNLAVADFLLIICLPFLT. The Extracellular segment spans residues 82-98; the sequence is DNYVQNWDWRFGSIPCR. An intrachain disulfide couples cysteine 97 to cysteine 174. A helical membrane pass occupies residues 99-119; that stretch reads VMLFMLAMNRQGSIIFLTVVA. Residues 120–140 lie on the Cytoplasmic side of the membrane; that stretch reads VDRYFRVVHPHHFLNKISNRT. The helical transmembrane segment at 141–161 threads the bilayer; sequence AAIISCFLWGITIGLTVHLLY. The Extracellular segment spans residues 162–189; the sequence is TDMMTRNGDANLCSSFSICYTFRWHDAM. Residues 190–210 form a helical membrane-spanning segment; that stretch reads FLLEFFLPLGIILFCSGRIIW. Topologically, residues 211–226 are cytoplasmic; sequence SLRQRQMDRHVKIKRA. A helical transmembrane segment spans residues 227–247; sequence INFIMVVAIVFVICFLPSVAV. Residues 248 to 270 are Extracellular-facing; that stretch reads RIRIFWLLYKHNVRNCDIYSSVD. A helical membrane pass occupies residues 271-291; it reads LAFFTTLSFTYMNSMLDPVVY. The Cytoplasmic portion of the chain corresponds to 292–360; it reads YFSSPSFPNF…SPPYLASTSR (69 aa). A disordered region spans residues 320 to 360; sequence NNRSTSVELTGDPSTIRSIPGALMTDPSEPGSPPYLASTSR. The segment covering 321 to 336 has biased composition (polar residues); the sequence is NRSTSVELTGDPSTIR. Position 325 is a phosphoserine (serine 325).

The protein belongs to the G-protein coupled receptor 1 family. As to expression, expressed in adipose tissue, lung and spleen.

Its subcellular location is the cell membrane. Its function is as follows. Acts as a high affinity receptor for both nicotinic acid (also known as niacin) and (D)-beta-hydroxybutyrate and mediates increased adiponectin secretion and decreased lipolysis through G(i)-protein-mediated inhibition of adenylyl cyclase. This pharmacological effect requires nicotinic acid doses that are much higher than those provided by a normal diet. Mediates nicotinic acid-induced apoptosis in mature neutrophils. Receptor activation by nicotinic acid results in reduced cAMP levels which may affect activity of cAMP-dependent protein kinase A and phosphorylation of target proteins, leading to neutrophil apoptosis. The rank order of potency for the displacement of nicotinic acid binding is 5-methyl pyrazole-3-carboxylic acid = pyridine-3-acetic acid &gt; acifran &gt; 5-methyl nicotinic acid = acipimox &gt;&gt; nicotinuric acid = nicotinamide. This Rattus norvegicus (Rat) protein is Hydroxycarboxylic acid receptor 2 (Hcar2).